A 476-amino-acid polypeptide reads, in one-letter code: Bifunctional protein HldE (476 aa).

Positions 1 to 319 are ribokinase; the sequence is MKVSLPAFEK…EALALHHGES (319 aa). 195–198 contributes to the ATP binding site; that stretch reads NMSE. Residue aspartate 264 is part of the active site. A cytidylyltransferase region spans residues 345-476; sequence MTNGCFDILH…AIIQNIMANQ (132 aa).

It in the N-terminal section; belongs to the carbohydrate kinase PfkB family. This sequence in the C-terminal section; belongs to the cytidylyltransferase family. As to quaternary structure, homodimer.

The catalysed reaction is D-glycero-beta-D-manno-heptose 7-phosphate + ATP = D-glycero-beta-D-manno-heptose 1,7-bisphosphate + ADP + H(+). The enzyme catalyses D-glycero-beta-D-manno-heptose 1-phosphate + ATP + H(+) = ADP-D-glycero-beta-D-manno-heptose + diphosphate. Its pathway is nucleotide-sugar biosynthesis; ADP-L-glycero-beta-D-manno-heptose biosynthesis; ADP-L-glycero-beta-D-manno-heptose from D-glycero-beta-D-manno-heptose 7-phosphate: step 1/4. The protein operates within nucleotide-sugar biosynthesis; ADP-L-glycero-beta-D-manno-heptose biosynthesis; ADP-L-glycero-beta-D-manno-heptose from D-glycero-beta-D-manno-heptose 7-phosphate: step 3/4. In terms of biological role, catalyzes the phosphorylation of D-glycero-D-manno-heptose 7-phosphate at the C-1 position to selectively form D-glycero-beta-D-manno-heptose-1,7-bisphosphate. Functionally, catalyzes the ADP transfer from ATP to D-glycero-beta-D-manno-heptose 1-phosphate, yielding ADP-D-glycero-beta-D-manno-heptose. The protein is Bifunctional protein HldE of Shewanella baltica (strain OS185).